A 347-amino-acid chain; its full sequence is uncharacterized protein (347 aa).

Belongs to the MG067/MG068/MG395 family.

This is an uncharacterized protein from Mycoplasma pneumoniae (strain ATCC 29342 / M129 / Subtype 1) (Mycoplasmoides pneumoniae).